Reading from the N-terminus, the 98-residue chain is Large ribosomal subunit protein uL23 (98 aa).

Belongs to the universal ribosomal protein uL23 family. In terms of assembly, part of the 50S ribosomal subunit. Contacts protein L29, and trigger factor when it is bound to the ribosome.

Functionally, one of the early assembly proteins it binds 23S rRNA. One of the proteins that surrounds the polypeptide exit tunnel on the outside of the ribosome. Forms the main docking site for trigger factor binding to the ribosome. This Bordetella avium (strain 197N) protein is Large ribosomal subunit protein uL23.